Consider the following 231-residue polypeptide: uncharacterized protein (231 aa).

10–34 (VVTGAGSGIGEAIATLLHEEGAKVV) contacts NADP(+). Ser140 lines the substrate pocket. Tyr153 (proton acceptor) is an active-site residue.

Belongs to the short-chain dehydrogenases/reductases (SDR) family.

This is an uncharacterized protein from Staphylococcus aureus (strain MRSA252).